A 378-amino-acid polypeptide reads, in one-letter code: MSKRDYYEVLSVGRDASEREIKKAYKRLAMKFHPDRNPGDKAAETSFKEVKEAYEILTDSDKKAAYDQFGHAGVDPNRGGGGFGGNADFGDVFGDVFGDIFGGGRRGGGQRQAARGSDLRYNLELSLEEAVKGLTKELRIPTLAHCDTCDGSGAKKGTSPTTCGTCHGQGQVQMRQGFFAVQQACPTCHGRGKIIKDPCNSCHGEGRVEKSKTLSVKIPAGVDNGDRIRLSGEGEAGEFGAPPGDLYVQVSVREHAIFVRDGNNLYCEVPISFGKAALGGEIEVPTLDGKVNLKIPAETQTGRMFRMRGKGVKSVRSHAVGDLLCKVVMETPVKLNERQKELLREFDETLAGSSSKKHSPKAEGFFDGVKKFFQDLNS.

In terms of domain architecture, J spans Asp-5–Gly-70. A CR-type zinc finger spans residues Gly-133 to Ser-211. Cys-146, Cys-149, Cys-163, Cys-166, Cys-185, Cys-188, Cys-199, and Cys-202 together coordinate Zn(2+). CXXCXGXG motif repeat units lie at residues Cys-146–Gly-153, Cys-163–Gly-170, Cys-185–Gly-192, and Cys-199–Gly-206.

It belongs to the DnaJ family. As to quaternary structure, homodimer. It depends on Zn(2+) as a cofactor.

It localises to the cytoplasm. Participates actively in the response to hyperosmotic and heat shock by preventing the aggregation of stress-denatured proteins and by disaggregating proteins, also in an autonomous, DnaK-independent fashion. Unfolded proteins bind initially to DnaJ; upon interaction with the DnaJ-bound protein, DnaK hydrolyzes its bound ATP, resulting in the formation of a stable complex. GrpE releases ADP from DnaK; ATP binding to DnaK triggers the release of the substrate protein, thus completing the reaction cycle. Several rounds of ATP-dependent interactions between DnaJ, DnaK and GrpE are required for fully efficient folding. Also involved, together with DnaK and GrpE, in the DNA replication of plasmids through activation of initiation proteins. The chain is Chaperone protein DnaJ from Shewanella woodyi (strain ATCC 51908 / MS32).